Reading from the N-terminus, the 513-residue chain is MEEIQIYLQLERSQQHDFLYPLIFQEYIYAFAHDRGFNRSISSENLGYDNKFSFLIVKRLISRMYQQNHFFISLNDSNKNLFCARNKNFDSQIISEVFACIVEIPFSIPYINLEWKKKKIVKPQNLRSIHSTFPFLEDNFSHLNLLVDILIPYPIHAEILVQTLRYWIKDASSLHLLRFFLHEYCILNSFIIPKKASSSFSNFSKRNPKLFLFLYNSHVCEYESVFLFLRNQSSHLRSTSSGVLLERIYFYRKIERLVNTFVKLKYFQPNLWFVKEPYIHYVSYQKIASLASKGTSLLMKKWKCYFVTFWQWYFSLWFHPKRIYIKQLSNQSFYFLGYLSSVRMNFSVVRSQILGKSFLINNVIKKFDTLVPTIPMIASLAKAKFCNVLGHPISKPVWADLSDSHIIDRFWRICRNISHYHSGSSKKKSLYRIKYILRLSCARTLARKHKSTVRTFLKKLGSELLKEFFRSEEDVFSLTFHKASPAFWEVYRSRIWYLDIICLNDLGNPKSQF.

It belongs to the intron maturase 2 family. MatK subfamily.

It localises to the plastid. The protein localises to the chloroplast. In terms of biological role, usually encoded in the trnK tRNA gene intron. Probably assists in splicing its own and other chloroplast group II introns. The chain is Maturase K from Byblis liniflora (Carnivorous plant).